Here is a 427-residue protein sequence, read N- to C-terminus: uncharacterized protein (427 aa).

Belongs to the MG032/MG096/MG288 family.

This is an uncharacterized protein from Mycoplasma pneumoniae (strain ATCC 29342 / M129 / Subtype 1) (Mycoplasmoides pneumoniae).